Here is a 475-residue protein sequence, read N- to C-terminus: UDP-N-acetylmuramoylalanine--D-glutamate ligase (475 aa).

130–136 (GTNGKTT) contacts ATP.

This sequence belongs to the MurCDEF family.

The protein resides in the cytoplasm. The catalysed reaction is UDP-N-acetyl-alpha-D-muramoyl-L-alanine + D-glutamate + ATP = UDP-N-acetyl-alpha-D-muramoyl-L-alanyl-D-glutamate + ADP + phosphate + H(+). It functions in the pathway cell wall biogenesis; peptidoglycan biosynthesis. In terms of biological role, cell wall formation. Catalyzes the addition of glutamate to the nucleotide precursor UDP-N-acetylmuramoyl-L-alanine (UMA). The polypeptide is UDP-N-acetylmuramoylalanine--D-glutamate ligase (Corynebacterium diphtheriae (strain ATCC 700971 / NCTC 13129 / Biotype gravis)).